The following is a 240-amino-acid chain: ATP-dependent dethiobiotin synthetase BioD (240 aa).

Glycine 13–isoleucine 18 is an ATP binding site. Threonine 17 contacts Mg(2+). The active site involves lysine 38. Threonine 42 lines the substrate pocket. ATP is bound by residues aspartate 55, glutamate 116–glycine 119, and proline 214–leucine 216. Mg(2+)-binding residues include aspartate 55 and glutamate 116.

The protein belongs to the dethiobiotin synthetase family. Homodimer. Mg(2+) is required as a cofactor.

The protein resides in the cytoplasm. The catalysed reaction is (7R,8S)-7,8-diammoniononanoate + CO2 + ATP = (4R,5S)-dethiobiotin + ADP + phosphate + 3 H(+). It functions in the pathway cofactor biosynthesis; biotin biosynthesis; biotin from 7,8-diaminononanoate: step 1/2. Its function is as follows. Catalyzes a mechanistically unusual reaction, the ATP-dependent insertion of CO2 between the N7 and N8 nitrogen atoms of 7,8-diaminopelargonic acid (DAPA, also called 7,8-diammoniononanoate) to form a ureido ring. In Thermodesulfovibrio yellowstonii (strain ATCC 51303 / DSM 11347 / YP87), this protein is ATP-dependent dethiobiotin synthetase BioD.